We begin with the raw amino-acid sequence, 403 residues long: Tryptophan synthase beta chain (403 aa).

Lys-88 bears the N6-(pyridoxal phosphate)lysine mark.

Belongs to the TrpB family. In terms of assembly, tetramer of two alpha and two beta chains. It depends on pyridoxal 5'-phosphate as a cofactor.

The enzyme catalyses (1S,2R)-1-C-(indol-3-yl)glycerol 3-phosphate + L-serine = D-glyceraldehyde 3-phosphate + L-tryptophan + H2O. Its pathway is amino-acid biosynthesis; L-tryptophan biosynthesis; L-tryptophan from chorismate: step 5/5. The beta subunit is responsible for the synthesis of L-tryptophan from indole and L-serine. The polypeptide is Tryptophan synthase beta chain (Shewanella frigidimarina (strain NCIMB 400)).